Reading from the N-terminus, the 389-residue chain is Dirigent protein 25 (389 aa).

The signal sequence occupies residues 1–21 (MAGCKVLFFLILALAITFVSA). Low complexity-rich tracts occupy residues 50–68 (GPFP…SGTG), 77–86 (LGTNTGPGPL), and 98–135 (SSGT…PLPT). The segment at 50 to 135 (GPFPTANSGP…PGSGSGPLPT (86 aa)) is disordered.

This sequence belongs to the plant dirigent protein family. In terms of assembly, homodimer.

It localises to the secreted. Its subcellular location is the extracellular space. The protein localises to the apoplast. In terms of biological role, dirigent proteins impart stereoselectivity on the phenoxy radical-coupling reaction, yielding optically active lignans from two molecules of coniferyl alcohol in the biosynthesis of lignans, flavonolignans, and alkaloids and thus plays a central role in plant secondary metabolism. The chain is Dirigent protein 25 (DIR25) from Arabidopsis thaliana (Mouse-ear cress).